The primary structure comprises 373 residues: CXADR-like membrane protein (373 aa).

The signal sequence occupies residues 1-17 (MSLFFLWLVSYYVGTLG). Ig-like C2-type domains follow at residues 18-126 (THTE…VILK) and 134-223 (PKCE…VRVT). Topologically, residues 18–234 (THTEIKRVAE…QYVQSIGMVA (217 aa)) are extracellular. Intrachain disulfides connect Cys-34–Cys-110 and Cys-152–Cys-207. Asn-73 and Asn-196 each carry an N-linked (GlcNAc...) asparagine glycan. Residues 235–255 (GAVTGIVAGALLIFLLIWLLI) form a helical membrane-spanning segment. Residues 256–373 (RRKSKDRYEE…PSQSKAFQTV (118 aa)) are Cytoplasmic-facing. Residues 263–280 (YEEEDRPNEIREDAEAPR) show a composition bias toward basic and acidic residues. The disordered stretch occupies residues 263 to 373 (YEEEDRPNEI…PSQSKAFQTV (111 aa)). 3 stretches are compositionally biased toward low complexity: residues 287 to 313 (SSSS…ASRS), 321 to 332 (AAPQQPGLAPQA), and 353 to 363 (LTKAETTLSTT). Polar residues predominate over residues 364 to 373 (PSQSKAFQTV).

Predominantly expressed in epithelial cells within different tissues and in the white adipose tissue. Expressed at high levels in the heart and brain, at intermediate levels in the lung, skeletal muscle, kidney and testis and at low levels in the liver and spleen.

Its subcellular location is the cell junction. It is found in the tight junction. It localises to the cell membrane. In terms of biological role, may be involved in the cell-cell adhesion. May play a role in adipocyte differentiation and development of obesity. Is required for normal small intestine development. The protein is CXADR-like membrane protein (Clmp) of Mus musculus (Mouse).